We begin with the raw amino-acid sequence, 1052 residues long: Kruppel-like factor 18 (1052 aa).

3 C2H2-type zinc fingers span residues 964–988 (YVCTYEDCKMSYSKACHLRTHMRKH), 994–1018 (YVCDVEGCTWKFARSDELNRHKKRH), and 1024–1046 (YLCSICSKNFARSDHLKQHAKVH).

It belongs to the krueppel C2H2-type zinc-finger protein family.

It is found in the nucleus. This chain is Kruppel-like factor 18, found in Homo sapiens (Human).